We begin with the raw amino-acid sequence, 498 residues long: ATP synthase subunit beta, chloroplastic (498 aa).

Residue 172 to 179 (GGAGVGKT) coordinates ATP.

It belongs to the ATPase alpha/beta chains family. As to quaternary structure, F-type ATPases have 2 components, CF(1) - the catalytic core - and CF(0) - the membrane proton channel. CF(1) has five subunits: alpha(3), beta(3), gamma(1), delta(1), epsilon(1). CF(0) has four main subunits: a(1), b(1), b'(1) and c(9-12).

It localises to the plastid. The protein localises to the chloroplast thylakoid membrane. It catalyses the reaction ATP + H2O + 4 H(+)(in) = ADP + phosphate + 5 H(+)(out). Its function is as follows. Produces ATP from ADP in the presence of a proton gradient across the membrane. The catalytic sites are hosted primarily by the beta subunits. This chain is ATP synthase subunit beta, chloroplastic, found in Lactuca sativa (Garden lettuce).